The chain runs to 358 residues: Peptide chain release factor 1 (358 aa).

At Gln233 the chain carries N5-methylglutamine.

The protein belongs to the prokaryotic/mitochondrial release factor family. In terms of processing, methylated by PrmC. Methylation increases the termination efficiency of RF1.

It localises to the cytoplasm. Its function is as follows. Peptide chain release factor 1 directs the termination of translation in response to the peptide chain termination codons UAG and UAA. The protein is Peptide chain release factor 1 of Lysinibacillus sphaericus (strain C3-41).